The following is a 749-amino-acid chain: Semaphorin-3B (749 aa).

Positions 1 to 24 (MGRAGAAAVIPGLALLWAVGLGSA) are cleaved as a signal peptide. Residues 30-513 (RLRLSFQELQ…SRSAVAQIAL (484 aa)) enclose the Sema domain. Asparagine 82 carries an N-linked (GlcNAc...) asparagine glycan. A disulfide bridge connects residues cysteine 102 and cysteine 113. Residue asparagine 124 is glycosylated (N-linked (GlcNAc...) asparagine). Cystine bridges form between cysteine 131-cysteine 140, cysteine 269-cysteine 380, and cysteine 293-cysteine 340. Residue asparagine 427 is glycosylated (N-linked (GlcNAc...) asparagine). 2 disulfides stabilise this stretch: cysteine 516–cysteine 534 and cysteine 644–cysteine 710. The 87-residue stretch at 573 to 659 (PALLEHKVFG…GFTQPLRRLS (87 aa)) folds into the Ig-like C2-type domain. Residues 702-749 (GSANSLRMCRPQPALQSLPLESRRKGRNRRTHAPEPRAERGPRSATHW) are disordered. The span at 733 to 743 (HAPEPRAERGP) shows a compositional bias: basic and acidic residues.

This sequence belongs to the semaphorin family. As to expression, expressed abundantly but differentially in a variety of neural and nonneural tissues.

The protein localises to the secreted. The protein resides in the endoplasmic reticulum. In terms of biological role, inhibits axonal extension by providing local signals to specify territories inaccessible for growing axons. The protein is Semaphorin-3B (SEMA3B) of Homo sapiens (Human).